A 336-amino-acid polypeptide reads, in one-letter code: Sodium/bile acid cotransporter 7 (336 aa).

At 1–10 (MGLIARVRKE) the chain is on the cytoplasmic side. A helical membrane pass occupies residues 11 to 31 (WFIIGIVLVITFAKLQPSVGV). Residues 32–37 (KGGPLH) lie on the Extracellular side of the membrane. The chain crosses the membrane as a helical span at residues 38 to 58 (PEITITYVAVSVIFFNSGLSL). The Cytoplasmic portion of the chain corresponds to 59–71 (KTEELASALMHVK). A helical transmembrane segment spans residues 72–92 (LHFFVQTFTLVFFPIAIWLLL). The Extracellular portion of the chain corresponds to 93 to 116 (KVLALTAINEWLLRGLQTVACMPP). Residues 117-137 (PVSSAVILTKAVGGNEAAAIF) traverse the membrane as a helical segment. Asn-138 is a topological domain (cytoplasmic). The chain crosses the membrane as a helical span at residues 139–159 (SAFGSFLGIVVTPLLLLVFLG). The Extracellular segment spans residues 160–163 (SSSS). The chain crosses the membrane as a helical span at residues 164–184 (VPFTSIFSQLFMTVVVPLIVG). Topologically, residues 185-201 (QVCRRFLRECLDRRKPP) are cytoplasmic. A helical membrane pass occupies residues 202–222 (FGAVSSVVLLMIIYSTFCDTF). The Extracellular portion of the chain corresponds to 223 to 233 (NNPNIELDHLS). The chain crosses the membrane as a helical span at residues 234–254 (LLTVVFIIFSIQLSFMALIFF). Residues 255 to 270 (LSTRKSSGFSAADSVA) are Cytoplasmic-facing. Residues 271-291 (IMFCATHKSLTLGIPMLKIVF) form a helical membrane-spanning segment. Residues 292-298 (EGYEHLS) lie on the Extracellular side of the membrane. Residues 299–319 (LISVPLLIYHPAQILLGSVLL) traverse the membrane as a helical segment. Over 320–336 (PSIKTWMSGRQKTLTPI) the chain is Cytoplasmic.

Belongs to the bile acid:sodium symporter (BASS) (TC 2.A.28) family.

The protein resides in the cell membrane. It is found in the endoplasmic reticulum membrane. Its subcellular location is the golgi apparatus membrane. Involved in teeth and skeletal development. Has an essential role in the biosynthesis and trafficking of glycosaminoglycans and glycoproteins to produce a proper functioning extracellular matrix. Required for extracellular matrix mineralization. Also involved in the regulation of cellular calcium homeostasis. Does not show transport activity towards bile acids or steroid sulfates. This chain is Sodium/bile acid cotransporter 7 (slc10a7), found in Danio rerio (Zebrafish).